The following is a 182-amino-acid chain: Protein Syd (182 aa).

It belongs to the Syd family.

The protein resides in the cell inner membrane. In terms of biological role, interacts with the SecY protein in vivo. May bind preferentially to an uncomplexed state of SecY, thus functioning either as a chelating agent for excess SecY in the cell or as a regulatory factor that negatively controls the translocase function. The chain is Protein Syd from Aeromonas hydrophila subsp. hydrophila (strain ATCC 7966 / DSM 30187 / BCRC 13018 / CCUG 14551 / JCM 1027 / KCTC 2358 / NCIMB 9240 / NCTC 8049).